A 171-amino-acid chain; its full sequence is Transcription antitermination protein NusB (171 aa).

This sequence belongs to the NusB family.

Involved in transcription antitermination. Required for transcription of ribosomal RNA (rRNA) genes. Binds specifically to the boxA antiterminator sequence of the ribosomal RNA (rrn) operons. This chain is Transcription antitermination protein NusB, found in Brucella ovis (strain ATCC 25840 / 63/290 / NCTC 10512).